We begin with the raw amino-acid sequence, 631 residues long: tRNA uridine 5-carboxymethylaminomethyl modification enzyme MnmG (631 aa).

FAD-binding positions include 13–18, valine 125, and serine 180; that span reads GGGHAG. 273 to 287 serves as a coordination point for NAD(+); the sequence is GPRYCPSIEDKVMRF. An FAD-binding site is contributed by glutamine 370.

It belongs to the MnmG family. In terms of assembly, homodimer. Heterotetramer of two MnmE and two MnmG subunits. The cofactor is FAD.

It is found in the cytoplasm. In terms of biological role, NAD-binding protein involved in the addition of a carboxymethylaminomethyl (cmnm) group at the wobble position (U34) of certain tRNAs, forming tRNA-cmnm(5)s(2)U34. This Vibrio atlanticus (strain LGP32) (Vibrio splendidus (strain Mel32)) protein is tRNA uridine 5-carboxymethylaminomethyl modification enzyme MnmG.